The primary structure comprises 335 residues: Glyceraldehyde-3-phosphate dehydrogenase (335 aa).

NAD(+)-binding positions include 15 to 16 and Asp37; that span reads RI. D-glyceraldehyde 3-phosphate-binding positions include 155 to 157, Thr186, Arg201, 214 to 215, and Arg237; these read SCT and TG. Cys156 functions as the Nucleophile in the catalytic mechanism. NAD(+) contacts are provided by Gln301 and Asn318.

The protein belongs to the glyceraldehyde-3-phosphate dehydrogenase family. In terms of assembly, homotetramer.

It is found in the cytoplasm. The catalysed reaction is D-glyceraldehyde 3-phosphate + phosphate + NADP(+) = (2R)-3-phospho-glyceroyl phosphate + NADPH + H(+). It carries out the reaction D-glyceraldehyde 3-phosphate + phosphate + NAD(+) = (2R)-3-phospho-glyceroyl phosphate + NADH + H(+). It participates in carbohydrate degradation; glycolysis; pyruvate from D-glyceraldehyde 3-phosphate: step 1/5. The sequence is that of Glyceraldehyde-3-phosphate dehydrogenase (gap) from Haloarcula vallismortis (Halobacterium vallismortis).